Consider the following 611-residue polypeptide: MAAVRGLRVSVKAGGGAEPEPMEVEEGEVEAAADRASPREVVSGSNRRYENRAGTFITGIDVTSKEAIEKKEQRAKRFHFRAEVSDQQRNVVLDREMIRKAIPKVRLETLYVYGVDDMSTEDIFAFFKQYPPGYIEWLDDSSCNVVWLDEVTPSRALLNLSSMPTNEKGQRKKDGEHSSARSKKDRLDDSPLSSGDETEEGEVEEDNPSEAEDEDETETEKKSVNPPDTLSEAEQASLLKNELRPSSKPVKGNSLYMRFATKDDKKELGAARRSQYYMKYGNPNYGGMKGILSNSWKRRYHSRRLQRDVIKKSTFIGDDVEITPTYKHLHSGLVNVPEEPIEEEEEEEEEEEDMDEDDRVVVEYRDELQAFKREREGARRSAASNSDSDEMDYDLELKMISTPSPKKSMKMTMYADEVESQLKTIRNSMRSDSVGNSVKSRIGSKSHAEKPADVRLILEEKRQSTASRQQSSSGKSDVRQRLGKRPHSPEIRKTLSIAPTSRREPLSDVHSRLGLPKQLEGKGLYSDSKEKKTGSLWNRLGTAPKDKERPSEKSEKSPAAPEEEDSVLQQAWGALIKEKEQIRQKKSRLDNLPSLQIEISRESSSGSDTDS.

Residues 1 to 44 (MAAVRGLRVSVKAGGGAEPEPMEVEEGEVEAAADRASPREVVSG) form a disordered region. Residues 20-31 (EPMEVEEGEVEA) show a composition bias toward acidic residues. An RNA recognition motif (RRM) domain region spans residues 108 to 169 (ETLYVYGVDD…LSSMPTNEKG (62 aa)). The WLDD motif; essential for 7-methylguanosine-containing mRNA cap binding signature appears at 137 to 140 (WLDD). Disordered regions lie at residues 159 to 230 (NLSS…PDTL), 338 to 360 (EEPIEEEEEEEEEEEDMDEDDRV), 373 to 393 (REREGARRSAASNSDSDEMDY), 423 to 568 (KTIR…DSVL), and 583 to 611 (RQKKSRLDNLPSLQIEISRESSSGSDTDS). A compositionally biased stretch (basic and acidic residues) spans 168-179 (KGQRKKDGEHSS). Acidic residues-rich tracts occupy residues 196 to 218 (DETEEGEVEEDNPSEAEDEDETE) and 339 to 358 (EPIEEEEEEEEEEEDMDEDD). The span at 423 to 439 (KTIRNSMRSDSVGNSVK) shows a compositional bias: polar residues. Residues 446-463 (SHAEKPADVRLILEEKRQ) are compositionally biased toward basic and acidic residues. The segment covering 464-475 (STASRQQSSSGK) has biased composition (low complexity). Composition is skewed to basic and acidic residues over residues 501–511 (SRREPLSDVHS) and 544–556 (PKDKERPSEKSEK). Over residues 602–611 (ESSSGSDTDS) the composition is skewed to low complexity.

This sequence belongs to the NCBP3 family. As to quaternary structure, component of an alternative cap-binding complex (CBC) composed of NCBP1/CBP80 and NCBP3.

The protein localises to the nucleus. Its subcellular location is the cytoplasm. Associates with NCBP1/CBP80 to form an alternative cap-binding complex (CBC) which plays a key role in mRNA export. NCBP3 serves as adapter protein linking the capped RNAs (m7GpppG-capped RNA) to NCBP1/CBP80. Unlike the conventional CBC with NCBP2 which binds both small nuclear RNA (snRNA) and messenger (mRNA) and is involved in their export from the nucleus, the alternative CBC with NCBP3 does not bind snRNA and associates only with mRNA thereby playing a role in only mRNA export. The protein is Nuclear cap-binding protein subunit 3 of Xenopus tropicalis (Western clawed frog).